The sequence spans 750 residues: Serine/threonine-protein kinase PknG (750 aa).

The segment at 1–66 (MAKASETERS…PQDRMATTSR (66 aa)) is disordered. Residues 17–34 (ADAQTATSATVRPLSTQA) show a composition bias toward polar residues. The 246-residue stretch at 151–396 (YEVKGCIAHG…EMSAQLTGVL (246 aa)) folds into the Protein kinase domain. ATP contacts are provided by residues 157-165 (IAHGGLGWI) and Lys181. The active-site Proton acceptor is Asp276.

This sequence belongs to the protein kinase superfamily. Ser/Thr protein kinase family. In terms of processing, autophosphorylated.

The catalysed reaction is L-seryl-[protein] + ATP = O-phospho-L-seryl-[protein] + ADP + H(+). The enzyme catalyses L-threonyl-[protein] + ATP = O-phospho-L-threonyl-[protein] + ADP + H(+). The polypeptide is Serine/threonine-protein kinase PknG (pknG) (Mycobacterium bovis (strain ATCC BAA-935 / AF2122/97)).